Here is a 255-residue protein sequence, read N- to C-terminus: Probable iron chelatin transport ATP-binding protein jhp_0821 (255 aa).

The ABC transporter domain occupies 3-240; it reads LEVKNLSFKY…HNLSALYDTP (238 aa). Residue 35–42 coordinates ATP; the sequence is APNGSGKT.

Belongs to the ABC transporter superfamily.

It is found in the cell inner membrane. Functionally, part of a binding-protein-dependent transport system for an iron chelatin. Probably responsible for energy coupling to the transport system (Potential). The protein is Probable iron chelatin transport ATP-binding protein jhp_0821 of Helicobacter pylori (strain J99 / ATCC 700824) (Campylobacter pylori J99).